The sequence spans 904 residues: Pyrimidine pathway regulatory protein 1 (904 aa).

The span at 1–11 (MKQKKFNSKKS) shows a compositional bias: basic residues. Positions 1 to 27 (MKQKKFNSKKSNRTDLSKRGDSPNIGI) are disordered. The span at 12 to 21 (NRTDLSKRGD) shows a compositional bias: basic and acidic residues. Zn(2+)-binding residues include cysteine 34, cysteine 37, cysteine 44, cysteine 51, cysteine 54, and cysteine 61. Positions 34-61 (CKRCRLKKIKCDQEFPSCKRCAKLEVPC) form a DNA-binding region, zn(2)-C6 fungal-type. A disordered region spans residues 883–904 (GNEGESSYDISKGKNSESGGIF).

In terms of assembly, binds DNA as a homodimer.

It localises to the nucleus. Positive regulator of URA1 and URA3 expression. This Saccharomyces cerevisiae (strain ATCC 204508 / S288c) (Baker's yeast) protein is Pyrimidine pathway regulatory protein 1 (PPR1).